The primary structure comprises 399 residues: Acetylornithine aminotransferase (399 aa).

Residues 97-98 and Phe130 each bind pyridoxal 5'-phosphate; that span reads GA. Arg133 is a N(2)-acetyl-L-ornithine binding site. 215–218 contributes to the pyridoxal 5'-phosphate binding site; the sequence is DEVQ. The residue at position 244 (Lys244) is an N6-(pyridoxal phosphate)lysine. Thr272 contributes to the N(2)-acetyl-L-ornithine binding site. Thr273 is a pyridoxal 5'-phosphate binding site.

Belongs to the class-III pyridoxal-phosphate-dependent aminotransferase family. ArgD subfamily. In terms of assembly, homodimer. Pyridoxal 5'-phosphate is required as a cofactor.

The protein localises to the cytoplasm. It carries out the reaction N(2)-acetyl-L-ornithine + 2-oxoglutarate = N-acetyl-L-glutamate 5-semialdehyde + L-glutamate. It functions in the pathway amino-acid biosynthesis; L-arginine biosynthesis; N(2)-acetyl-L-ornithine from L-glutamate: step 4/4. This chain is Acetylornithine aminotransferase, found in Mesorhizobium japonicum (strain LMG 29417 / CECT 9101 / MAFF 303099) (Mesorhizobium loti (strain MAFF 303099)).